The primary structure comprises 146 residues: Holo-[acyl-carrier-protein] synthase (146 aa).

The Mg(2+) site is built by Asp8 and Glu61.

Belongs to the P-Pant transferase superfamily. AcpS family. It depends on Mg(2+) as a cofactor.

It localises to the cytoplasm. The enzyme catalyses apo-[ACP] + CoA = holo-[ACP] + adenosine 3',5'-bisphosphate + H(+). Transfers the 4'-phosphopantetheine moiety from coenzyme A to a Ser of acyl-carrier-protein. The polypeptide is Holo-[acyl-carrier-protein] synthase (Rhodopseudomonas palustris (strain TIE-1)).